We begin with the raw amino-acid sequence, 132 residues long: Small ribosomal subunit protein uS8c (132 aa).

It belongs to the universal ribosomal protein uS8 family. In terms of assembly, part of the 30S ribosomal subunit.

The protein localises to the plastid. It localises to the chloroplast. One of the primary rRNA binding proteins, it binds directly to 16S rRNA central domain where it helps coordinate assembly of the platform of the 30S subunit. The protein is Small ribosomal subunit protein uS8c (rps8) of Dioscorea elephantipes (Elephant's foot yam).